The primary structure comprises 953 residues: UPF0746 protein DDB_G0281301 (953 aa).

Basic and acidic residues predominate over residues Met-1–Glu-10. The disordered stretch occupies residues Met-1–Leu-23. The segment covering Asn-11–Asp-21 has biased composition (acidic residues). Residues Tyr-35–Phe-69 form the SAP domain.

The protein belongs to the UPF0746 family.

The polypeptide is UPF0746 protein DDB_G0281301 (Dictyostelium discoideum (Social amoeba)).